The chain runs to 203 residues: 22.3 kDa class VI heat shock protein (203 aa).

One can recognise a sHSP domain in the interval 86-203 (ALRRGARTTV…DAHQAAAATA (118 aa)).

Belongs to the small heat shock protein (HSP20) family. In terms of assembly, may form oligomeric structures.

The protein localises to the cytoplasm. This is 22.3 kDa class VI heat shock protein (HSP22.3) from Oryza sativa subsp. japonica (Rice).